The sequence spans 84 residues: Cell division protein CrgA (84 aa).

2 helical membrane passes run 31–51 and 60–80; these read VAPVMLAMFLIGLAWIVVFYV and ALDNWNIVVGFGFIAAGFGVS.

The protein belongs to the CrgA family.

The protein localises to the cell membrane. Its function is as follows. Involved in cell division. Coordinates growth and cell division. Required for the formation of the sporulation septa. The sequence is that of Cell division protein CrgA from Streptomyces avermitilis (strain ATCC 31267 / DSM 46492 / JCM 5070 / NBRC 14893 / NCIMB 12804 / NRRL 8165 / MA-4680).